We begin with the raw amino-acid sequence, 343 residues long: Probable fructokinase-7 (343 aa).

An N-acetylglycine modification is found at glycine 2.

This sequence belongs to the carbohydrate kinase PfkB family.

The catalysed reaction is D-fructose + ATP = D-fructose 6-phosphate + ADP + H(+). Its pathway is glycan biosynthesis; starch biosynthesis. May play an important role in maintaining the flux of carbon towards starch formation. The sequence is that of Probable fructokinase-7 from Arabidopsis thaliana (Mouse-ear cress).